A 318-amino-acid polypeptide reads, in one-letter code: Bis(5'-nucleosyl)-tetraphosphatase, symmetrical (318 aa).

A disordered region spans residues 269–318 (PGREVTGPAPVARAPRRPRERLGRQRSRGNRGNAGNTAVPAKPQVDTPQD). Residues 282–297 (APRRPRERLGRQRSRG) show a composition bias toward basic residues.

This sequence belongs to the Ap4A hydrolase family.

It catalyses the reaction P(1),P(4)-bis(5'-adenosyl) tetraphosphate + H2O = 2 ADP + 2 H(+). Its function is as follows. Hydrolyzes diadenosine 5',5'''-P1,P4-tetraphosphate to yield ADP. The polypeptide is Bis(5'-nucleosyl)-tetraphosphatase, symmetrical (Xanthomonas oryzae pv. oryzae (strain KACC10331 / KXO85)).